Here is a 699-residue protein sequence, read N- to C-terminus: Elongation factor G (699 aa).

The region spanning 8 to 283 is the tr-type G domain; sequence EHIRNIGICA…AVVDFLPSPI (276 aa). Residues 17 to 24, 81 to 85, and 135 to 138 each bind GTP; these read AHIDAGKT, DTPGH, and NKMD.

It belongs to the TRAFAC class translation factor GTPase superfamily. Classic translation factor GTPase family. EF-G/EF-2 subfamily.

It localises to the cytoplasm. Functionally, catalyzes the GTP-dependent ribosomal translocation step during translation elongation. During this step, the ribosome changes from the pre-translocational (PRE) to the post-translocational (POST) state as the newly formed A-site-bound peptidyl-tRNA and P-site-bound deacylated tRNA move to the P and E sites, respectively. Catalyzes the coordinated movement of the two tRNA molecules, the mRNA and conformational changes in the ribosome. This Rickettsia sibirica (strain ATCC VR-151 / 246) protein is Elongation factor G.